The following is an 856-amino-acid chain: DNA mismatch repair protein MutS (856 aa).

Residue 618–625 coordinates ATP; it reads GPNMGGKS.

It belongs to the DNA mismatch repair MutS family.

This protein is involved in the repair of mismatches in DNA. It is possible that it carries out the mismatch recognition step. This protein has a weak ATPase activity. This chain is DNA mismatch repair protein MutS, found in Shewanella baltica (strain OS155 / ATCC BAA-1091).